Here is a 264-residue protein sequence, read N- to C-terminus: Occludin/ELL domain-containing protein 1 (264 aa).

The segment covering 1–10 (MHNPDGSASP) has biased composition (polar residues). A disordered region spans residues 1 to 112 (MHNPDGSASP…QPGPHKAKTK (112 aa)). Residues 96-105 (PRPPCQPQPG) are compositionally biased toward pro residues. One can recognise an OCEL domain in the interval 147-257 (PDYELKYPPV…QIQKFDDQGD (111 aa)).

The protein belongs to the ELL/occludin family.

In Homo sapiens (Human), this protein is Occludin/ELL domain-containing protein 1 (OCEL1).